Here is a 2529-residue protein sequence, read N- to C-terminus: Zinc finger FYVE domain-containing protein 26 (2529 aa).

Disordered stretches follow at residues 584-650, 689-709, and 733-810; these read HLPE…PGPH, SSHRTPEETKLPEDQSCSAAR, and VTSN…RFQT. Phosphoserine is present on residues S605 and S609. Over residues 689–701 the composition is skewed to basic and acidic residues; the sequence is SSHRTPEETKLPE. Residues 755-765 show a composition bias toward basic residues; sequence SSLRRGRRTRR. Positions 778-796 are enriched in low complexity; it reads SLEGTSSELSTSTSEGSLS. S791 carries the phosphoserine modification. Positions 797-810 are enriched in polar residues; that stretch reads AVSGQVESDSRFQT. A coiled-coil region spans residues 859–884; that stretch reads MFVERYQEVIQELARVEHKIENQNSD. The interval 1258 to 1286 is disordered; that stretch reads GLPLSTLGSPRPSENPSAERKSHSSPKDS. Positions 1263-1273 are enriched in polar residues; the sequence is TLGSPRPSENP. Positions 1274–1283 are enriched in basic and acidic residues; the sequence is SAERKSHSSP. Residues 1488–1515 adopt a coiled-coil conformation; the sequence is VSDMAVQEELKSELQRKLMELRVYQKIL. Residues S1732, S1754, S1770, and S1772 each carry the phosphoserine modification. A disordered region spans residues 1762–1799; that stretch reads APGSALVRSPSPKERAFPQTQPPVEFVPPETPPARDQW. An FYVE-type zinc finger spans residues 1802 to 1862; the sequence is DETESVCMVC…VCDQCYSYYN (61 aa). 8 residues coordinate Zn(2+): C1808, C1811, C1825, C1828, C1833, C1836, C1854, and C1857. The disordered stretch occupies residues 1865 to 1884; that stretch reads TPEESPCQSEVPDSAKNESP.

Belongs to the ZFYVE26 family. As to quaternary structure, interacts with AP5Z1, AP5B1, AP5S1 and SPG11. Interacts with TTC19 and KIF13A.

The protein localises to the cytoplasm. It is found in the cytoskeleton. The protein resides in the microtubule organizing center. Its subcellular location is the centrosome. It localises to the midbody. Phosphatidylinositol 3-phosphate-binding protein required for the abscission step in cytokinesis: recruited to the midbody during cytokinesis and acts as a regulator of abscission. May also be required for efficient homologous recombination DNA double-strand break repair. The protein is Zinc finger FYVE domain-containing protein 26 (Zfyve26) of Mus musculus (Mouse).